The sequence spans 168 residues: Chemoreceptor glutamine deamidase CheD (168 aa).

It belongs to the CheD family. In terms of assembly, forms a complex with CheC.

The catalysed reaction is L-glutaminyl-[protein] + H2O = L-glutamyl-[protein] + NH4(+). Functionally, deamidates glutamine residues to glutamate on methyl-accepting chemotaxis receptors (MCPs). CheD-mediated MCP deamidation is required for productive communication of the conformational signals of the chemoreceptors to the CheA kinase. The protein is Chemoreceptor glutamine deamidase CheD of Bacillus licheniformis (strain ATCC 14580 / DSM 13 / JCM 2505 / CCUG 7422 / NBRC 12200 / NCIMB 9375 / NCTC 10341 / NRRL NRS-1264 / Gibson 46).